The primary structure comprises 76 residues: Exodeoxyribonuclease 7 small subunit (76 aa).

Belongs to the XseB family. In terms of assembly, heterooligomer composed of large and small subunits.

The protein localises to the cytoplasm. The enzyme catalyses Exonucleolytic cleavage in either 5'- to 3'- or 3'- to 5'-direction to yield nucleoside 5'-phosphates.. Bidirectionally degrades single-stranded DNA into large acid-insoluble oligonucleotides, which are then degraded further into small acid-soluble oligonucleotides. This chain is Exodeoxyribonuclease 7 small subunit, found in Geobacillus thermodenitrificans (strain NG80-2).